A 1321-amino-acid polypeptide reads, in one-letter code: C-Jun-amino-terminal kinase-interacting protein 4 (1321 aa).

At Met-1 the chain carries N-acetylmethionine. Residues 7 to 95 enclose the RH1 domain; it reads VVYQEEPGGS…ITQYEREKAL (89 aa). The stretch at 66-166 forms a coiled coil; sequence AQDQEHQVEL…NALHQRHTEM (101 aa). Phosphoserine occurs at positions 109, 183, 185, 194, and 203. The tract at residues 203–292 is disordered; it reads SLGIFPLPAG…SDVATIPTDT (90 aa). Position 217 is a phosphothreonine (Thr-217). A compositionally biased stretch (polar residues) spans 236-253; that stretch reads ELSQPRSHTSLKVSNSPE. Ser-238, Ser-251, Ser-265, Ser-268, and Ser-272 each carry phosphoserine. Residues 266-285 are compositionally biased toward polar residues; that stretch reads DVSQGGSKATTPASTANSDV. Phosphothreonine is present on Thr-292. 4 positions are modified to phosphoserine: Ser-311, Ser-329, Ser-332, and Ser-347. 3 positions are modified to phosphothreonine: Thr-348, Thr-365, and Thr-418. A coiled-coil region spans residues 408–534; sequence REVENLILEN…LQEAVRWTEM (127 aa). A compositionally biased stretch (basic and acidic residues) spans 473–489; sequence LRKARAEAEDARQKAKD. Disordered regions lie at residues 473–500 and 563–600; these read LRKARAEAEDARQKAKDDDDSDIPTAQR and SSNTTKKPEPPVNLKYNAPTSHVTPSVKKRSSTLSQLP. The 72-residue stretch at 500–571 folds into the RH2 domain; it reads RKRFTRVEMA…SSSNTTKKPE (72 aa). A Phosphothreonine modification is found at Thr-586. Ser-588 carries the post-translational modification Phosphoserine. Thr-595 carries the phosphothreonine modification. Residues Ser-705, Ser-728, Ser-730, Ser-732, and Ser-733 each carry the phosphoserine modification. Residues 724-758 adopt a coiled-coil conformation; the sequence is SKQRSASQSSLDKLDQELKEQQKELKNQEELSSLV. Residues 854–906 are disordered; that stretch reads GAATSPSTNGASPVMDKPPEMEAENSEVDENVPTAEEATEATEGNAGSAEDTV. Polar residues predominate over residues 855-864; sequence AATSPSTNGA. Residues 874-883 show a composition bias toward acidic residues; the sequence is MEAENSEVDE. Positions 894–903 are enriched in low complexity; sequence ATEGNAGSAE. Residue Ser-1188 is modified to Phosphoserine. The interval 1239–1266 is disordered; that stretch reads PQSSSSGTDLTGDKAGPSAQEPGSQTPL. Position 1264 is a phosphothreonine (Thr-1264).

Belongs to the JIP scaffold family. Homodimer. The homodimer interacts with ARF6, forming a heterotetramer. Homooligomer. Interacts with MAX, MAPK14, MAP3K3, MYC, KNS2 and MAP2K4. Interaction with KNS2 is important in the formation of ternary complex with MAPK8. Interacts with NFKB1. Interacts with PIP4P1. Interacts with PIKFYVE. In terms of assembly, interacts with MAPK8, MAPK9, MAPK10. In terms of processing, phosphorylated by MAPK8 and MAPK14. As to expression, expressed only in testis on the round spermatids of stage I, II and II. Absent in spermatogonia and spermatocyte. Expressed in testis and in acute myeloid leukemia (AML) patients. In terms of tissue distribution, expressed in testis.

It localises to the cytoplasm. The protein localises to the perinuclear region. It is found in the lysosome membrane. The protein resides in the cytoplasmic vesicle. Its subcellular location is the secretory vesicle. It localises to the acrosome. With respect to regulation, may play a role in spermatozoa-egg-interaction. Its function is as follows. The JNK-interacting protein (JIP) group of scaffold proteins selectively mediates JNK signaling by aggregating specific components of the MAPK cascade to form a functional JNK signaling module. Regulates lysosomal positioning by acting as an adapter protein which links PIP4P1-positive lysosomes to the dynein-dynactin complex. Assists PIKFYVE selective functionality in microtubule-based endosome-to-TGN trafficking. The chain is C-Jun-amino-terminal kinase-interacting protein 4 from Homo sapiens (Human).